The sequence spans 69 residues: Cytochrome c oxidase subunit 8A, mitochondrial (69 aa).

The N-terminal 25 residues, 1–25 (MSVLTPLLLRGLTGSARRLPVLRAQ), are a transit peptide targeting the mitochondrion. Positions 2-19 (SVLTPLLLRGLTGSARRL) match the SIFI-degron motif. Over 26–36 (VHSKPPREKLG) the chain is Mitochondrial matrix. The helical transmembrane segment at 37–60 (TMDVAIGLTSCFVCFLLPSGWVLS) threads the bilayer. Residues 61-69 (HLETYKKRE) are Mitochondrial intermembrane-facing.

Belongs to the cytochrome c oxidase VIII family. As to quaternary structure, component of the cytochrome c oxidase (complex IV, CIV), a multisubunit enzyme composed of 14 subunits. The complex is composed of a catalytic core of 3 subunits MT-CO1, MT-CO2 and MT-CO3, encoded in the mitochondrial DNA, and 11 supernumerary subunits COX4I, COX5A, COX5B, COX6A, COX6B, COX6C, COX7A, COX7B, COX7C, COX8 and NDUFA4, which are encoded in the nuclear genome. The complex exists as a monomer or a dimer and forms supercomplexes (SCs) in the inner mitochondrial membrane with NADH-ubiquinone oxidoreductase (complex I, CI) and ubiquinol-cytochrome c oxidoreductase (cytochrome b-c1 complex, complex III, CIII), resulting in different assemblies (supercomplex SCI(1)III(2)IV(1) and megacomplex MCI(2)III(2)IV(2)). In terms of processing, in response to mitochondrial stress, the precursor protein is ubiquitinated by the SIFI complex in the cytoplasm before mitochondrial import, leading to its degradation. Within the SIFI complex, UBR4 initiates ubiquitin chain that are further elongated or branched by KCMF1.

The protein localises to the mitochondrion inner membrane. Its pathway is energy metabolism; oxidative phosphorylation. In terms of biological role, component of the cytochrome c oxidase, the last enzyme in the mitochondrial electron transport chain which drives oxidative phosphorylation. The respiratory chain contains 3 multisubunit complexes succinate dehydrogenase (complex II, CII), ubiquinol-cytochrome c oxidoreductase (cytochrome b-c1 complex, complex III, CIII) and cytochrome c oxidase (complex IV, CIV), that cooperate to transfer electrons derived from NADH and succinate to molecular oxygen, creating an electrochemical gradient over the inner membrane that drives transmembrane transport and the ATP synthase. Cytochrome c oxidase is the component of the respiratory chain that catalyzes the reduction of oxygen to water. Electrons originating from reduced cytochrome c in the intermembrane space (IMS) are transferred via the dinuclear copper A center (CU(A)) of subunit 2 and heme A of subunit 1 to the active site in subunit 1, a binuclear center (BNC) formed by heme A3 and copper B (CU(B)). The BNC reduces molecular oxygen to 2 water molecules using 4 electrons from cytochrome c in the IMS and 4 protons from the mitochondrial matrix. The polypeptide is Cytochrome c oxidase subunit 8A, mitochondrial (COX8A) (Eulemur fulvus fulvus (Brown lemur)).